The chain runs to 277 residues: Carbonyl reductase [NADPH] 1 (277 aa).

Residue serine 2 is modified to N-acetylserine. Serine 2 and serine 30 each carry phosphoserine. NADP(+) is bound by residues 10-34 (VTGA…GDVV), 63-64 (DI), and asparagine 90. Residues 95–97 (FKV) and glutamine 106 each bind glutathione. Substrate is bound at residue serine 140. Position 193–194 (193–194 (AY)) interacts with glutathione. The active-site Proton acceptor is tyrosine 194. Residues 194–198 (YGVTK) and 231–233 (VRT) contribute to the NADP(+) site. Lysine 239 is subject to N6-1-carboxyethyl lysine. Residues 258-277 (PPDAEGPHGQFVQDKKVEPW) are disordered.

It belongs to the short-chain dehydrogenases/reductases (SDR) family. Monomer.

It localises to the cytoplasm. The enzyme catalyses a secondary alcohol + NADP(+) = a ketone + NADPH + H(+). It carries out the reaction prostaglandin F2alpha + NADP(+) = prostaglandin E2 + NADPH + H(+). It catalyses the reaction prostaglandin E1 + NADP(+) = 15-oxoprostaglandin E1 + NADPH + H(+). The catalysed reaction is menadione + NADPH + H(+) = menadiol + NADP(+). The enzyme catalyses prostaglandin D2 + NADP(+) = 15-oxoprostaglandin D2 + NADPH + H(+). It carries out the reaction prostaglandin E2 + NADP(+) = 15-oxoprostaglandin E2 + NADPH + H(+). It catalyses the reaction prostaglandin F2alpha + NADP(+) = 15-oxoprostaglandin F2alpha + NADPH + H(+). The catalysed reaction is daunorubicin + NADPH + H(+) = 13-dihydrodaunorubicin + NADP(+). The enzyme catalyses S-nitrosoglutathione + NADPH + H(+) = S-(hydroxysulfenamide)glutathione + NADP(+). It carries out the reaction corticosterone + NADPH + H(+) = 20beta-dihydrocorticosterone + NADP(+). It catalyses the reaction a primary alcohol + NADP(+) = an aldehyde + NADPH + H(+). The catalysed reaction is cortisol + NADPH + H(+) = 20beta-dihydrocortisol + NADP(+). NADPH-dependent reductase with broad substrate specificity. Catalyzes the reduction of a wide variety of carbonyl compounds including quinones, prostaglandins, menadione, plus various xenobiotics. Catalyzes the reduction of the antitumor anthracyclines doxorubicin and daunorubicin to the cardiotoxic compounds doxorubicinol and daunorubicinol. Can convert prostaglandin E to prostaglandin F2-alpha. Can bind glutathione, which explains its higher affinity for glutathione-conjugated substrates. Catalyzes the reduction of S-nitrosoglutathione. In addition, participates in the glucocorticoid metabolism by catalyzing the NADPH-dependent cortisol/corticosterone into 20beta-dihydrocortisol (20b-DHF) or 20beta-corticosterone (20b-DHB), which are weak agonists of NR3C1 and NR3C2 in adipose tissue. The polypeptide is Carbonyl reductase [NADPH] 1 (Mus musculus (Mouse)).